The sequence spans 256 residues: 3-hydroxy-5-phosphonooxypentane-2,4-dione thiolase (256 aa).

The active-site Schiff-base intermediate with substrate is the K168.

It belongs to the DeoC/FbaB aldolase family. In terms of assembly, homodecamer.

It localises to the cytoplasm. It catalyses the reaction dihydroxyacetone phosphate + acetyl-CoA = 3-hydroxy-2,4-dioxopentyl phosphate + CoA. Its function is as follows. Involved in the degradation of phospho-AI-2, thereby terminating induction of the lsr operon and closing the AI-2 signaling cycle. Catalyzes the transfer of an acetyl moiety from 3-hydroxy-5-phosphonooxypentane-2,4-dione to CoA to form glycerone phosphate and acetyl-CoA. This chain is 3-hydroxy-5-phosphonooxypentane-2,4-dione thiolase (lsrF), found in Shigella flexneri.